The sequence spans 653 residues: Chaperone protein DnaK (653 aa).

The residue at position 198 (threonine 198) is a Phosphothreonine; by autocatalysis. Over residues 608–617 the composition is skewed to low complexity; that stretch reads DPEAAAHAAG. The disordered stretch occupies residues 608–653; the sequence is DPEAAAHAAGMHGGAATGGGDGANKHGKGAEDVVEAEFEEVNDDKK. Residues 618–629 show a composition bias toward gly residues; the sequence is MHGGAATGGGDG. Residues 639–653 are compositionally biased toward acidic residues; sequence DVVEAEFEEVNDDKK.

Belongs to the heat shock protein 70 family.

Acts as a chaperone. The chain is Chaperone protein DnaK from Magnetococcus marinus (strain ATCC BAA-1437 / JCM 17883 / MC-1).